A 119-amino-acid chain; its full sequence is MPRVKGGIVTRRRHKKILKLAKGYFGSKHRLFKSANAQVMKSLLYAYRDRRQKKRDFRKLWITRINAQARMNGLSYSRLMHGLKVAGIEVNRKMLADLAVNDKAAFNELATVAKSKLNA.

It belongs to the bacterial ribosomal protein bL20 family.

Binds directly to 23S ribosomal RNA and is necessary for the in vitro assembly process of the 50S ribosomal subunit. It is not involved in the protein synthesizing functions of that subunit. The chain is Large ribosomal subunit protein bL20 from Brevibacillus brevis (strain 47 / JCM 6285 / NBRC 100599).